Consider the following 312-residue polypeptide: NADPH-dependent alpha-keto amide reductase (312 aa).

Residues G25, T26, R27, and D59 each coordinate NADPH. Catalysis depends on proton donor residues Y64 and H122. At S123 the chain carries Phosphoserine. S157, Q179, S208, L210, T257, T258, S259, S260, K261, and R264 together coordinate NADPH.

Belongs to the aldo/keto reductase family. As to quaternary structure, monomer. Post-translationally, the N-terminus is blocked.

Its subcellular location is the cytoplasm. The protein resides in the nucleus. Its function is as follows. Reduces aromatic alpha-keto amides, aliphatic and aromatic alpha-keto esters, but not beta-keto esters. The chain is NADPH-dependent alpha-keto amide reductase from Saccharomyces cerevisiae (strain ATCC 204508 / S288c) (Baker's yeast).